The chain runs to 371 residues: tRNA 2-selenouridine synthase (371 aa).

The 124-residue stretch at 14-137 (FLDDVPLIDL…MRRFLIDTLD (124 aa)) folds into the Rhodanese domain. Cys97 functions as the S-selanylcysteine intermediate in the catalytic mechanism.

The protein belongs to the SelU family. As to quaternary structure, monomer.

It catalyses the reaction 5-methylaminomethyl-2-thiouridine(34) in tRNA + selenophosphate + (2E)-geranyl diphosphate + H2O + H(+) = 5-methylaminomethyl-2-selenouridine(34) in tRNA + (2E)-thiogeraniol + phosphate + diphosphate. The catalysed reaction is 5-methylaminomethyl-2-thiouridine(34) in tRNA + (2E)-geranyl diphosphate = 5-methylaminomethyl-S-(2E)-geranyl-thiouridine(34) in tRNA + diphosphate. It carries out the reaction 5-methylaminomethyl-S-(2E)-geranyl-thiouridine(34) in tRNA + selenophosphate + H(+) = 5-methylaminomethyl-2-(Se-phospho)selenouridine(34) in tRNA + (2E)-thiogeraniol. The enzyme catalyses 5-methylaminomethyl-2-(Se-phospho)selenouridine(34) in tRNA + H2O = 5-methylaminomethyl-2-selenouridine(34) in tRNA + phosphate. Involved in the post-transcriptional modification of the uridine at the wobble position (U34) of tRNA(Lys), tRNA(Glu) and tRNA(Gln). Catalyzes the conversion of 2-thiouridine (S2U-RNA) to 2-selenouridine (Se2U-RNA). Acts in a two-step process involving geranylation of 2-thiouridine (S2U) to S-geranyl-2-thiouridine (geS2U) and subsequent selenation of the latter derivative to 2-selenouridine (Se2U) in the tRNA chain. The chain is tRNA 2-selenouridine synthase from Aeromonas salmonicida (strain A449).